We begin with the raw amino-acid sequence, 424 residues long: Histidine--tRNA ligase (424 aa).

This sequence belongs to the class-II aminoacyl-tRNA synthetase family. As to quaternary structure, homodimer.

It localises to the cytoplasm. The enzyme catalyses tRNA(His) + L-histidine + ATP = L-histidyl-tRNA(His) + AMP + diphosphate + H(+). The polypeptide is Histidine--tRNA ligase (Thioalkalivibrio sulfidiphilus (strain HL-EbGR7)).